The primary structure comprises 346 residues: S-adenosylmethionine:tRNA ribosyltransferase-isomerase (346 aa).

This sequence belongs to the QueA family. Monomer.

The protein resides in the cytoplasm. The catalysed reaction is 7-aminomethyl-7-carbaguanosine(34) in tRNA + S-adenosyl-L-methionine = epoxyqueuosine(34) in tRNA + adenine + L-methionine + 2 H(+). It functions in the pathway tRNA modification; tRNA-queuosine biosynthesis. Functionally, transfers and isomerizes the ribose moiety from AdoMet to the 7-aminomethyl group of 7-deazaguanine (preQ1-tRNA) to give epoxyqueuosine (oQ-tRNA). This Neisseria meningitidis serogroup C (strain 053442) protein is S-adenosylmethionine:tRNA ribosyltransferase-isomerase.